The chain runs to 272 residues: SWIRM domain-containing protein laf2 (272 aa).

Residues H86 to G148 are disordered. Low complexity-rich tracts occupy residues S95 to G120 and R127 to I136. 2 positions are modified to phosphoserine: S130 and S132. Position 135 is a phosphothreonine (T135). The region spanning L182 to D272 is the SWIRM domain.

Component of the RPD3C(L) complex.

It is found in the nucleus. In terms of biological role, component of the RPD3C(L) histone deacetylase complex (HDAC) responsible for the deacetylation of lysine residues on the N-terminal part of the core histones (H2A, H2B, H3 and H4). Histone deacetylation gives a tag for epigenetic repression and plays an important role in transcriptional regulation, cell cycle progression and developmental events. This Schizosaccharomyces pombe (strain 972 / ATCC 24843) (Fission yeast) protein is SWIRM domain-containing protein laf2 (laf2).